The following is a 165-amino-acid chain: Lipoprotein signal peptidase (165 aa).

The next 2 membrane-spanning stretches (helical) occupy residues 64-84 and 88-108; these read LGRW…GAWM and GSRL…GNAV. Residues D118 and D136 contribute to the active site. A helical transmembrane segment spans residues 128–148; sequence SWYVFNVADAGIVAGVAGLLV.

The protein belongs to the peptidase A8 family.

The protein resides in the cell inner membrane. The enzyme catalyses Release of signal peptides from bacterial membrane prolipoproteins. Hydrolyzes -Xaa-Yaa-Zaa-|-(S,diacylglyceryl)Cys-, in which Xaa is hydrophobic (preferably Leu), and Yaa (Ala or Ser) and Zaa (Gly or Ala) have small, neutral side chains.. It participates in protein modification; lipoprotein biosynthesis (signal peptide cleavage). This protein specifically catalyzes the removal of signal peptides from prolipoproteins. This Methylobacterium sp. (strain 4-46) protein is Lipoprotein signal peptidase.